The chain runs to 255 residues: GTP cyclohydrolase III 1 (255 aa).

This sequence belongs to the archaeal-type GTP cyclohydrolase family.

It carries out the reaction GTP + 3 H2O = 2-amino-5-formylamino-6-(5-phospho-D-ribosylamino)pyrimidin-4(3H)-one + 2 phosphate + 2 H(+). Catalyzes the formation of 2-amino-5-formylamino-6-ribofuranosylamino-4(3H)-pyrimidinone ribonucleotide monophosphate and inorganic phosphate from GTP. Also has an independent pyrophosphate phosphohydrolase activity. The polypeptide is GTP cyclohydrolase III 1 (gch31) (Halobacterium salinarum (strain ATCC 700922 / JCM 11081 / NRC-1) (Halobacterium halobium)).